We begin with the raw amino-acid sequence, 727 residues long: NADH-ubiquinone oxidoreductase 75 kDa subunit, mitochondrial (727 aa).

Residues 1–23 constitute a mitochondrion transit peptide; sequence MLRIPVRKALVGLSKSPKGCVRT. A 2Fe-2S ferredoxin-type domain is found at 30 to 108; sequence NLIEVFVDGQ…GWNILTNSEK (79 aa). [2Fe-2S] cluster contacts are provided by Cys-64, Cys-75, and Cys-78. Lys-84 is subject to N6-acetyllysine. Position 92 (Cys-92) interacts with [2Fe-2S] cluster. A 4Fe-4S His(Cys)3-ligated-type domain is found at 108–147; sequence KSKKAREGVMEFLLANHPLDCPICDQGGECDLQDQSMMFG. [4Fe-4S] cluster-binding residues include His-124, Cys-128, Cys-131, Cys-137, Cys-176, Cys-179, Cys-182, and Cys-226. One can recognise a 4Fe-4S Mo/W bis-MGD-type domain in the interval 245-301; it reads TRKTESIDVMDAVGSNIVVSTRTGEVMRILPRMHEDINEEWISDKTRFAYDGLKRQR. An N6-acetyllysine mark is found at Lys-467, Lys-499, and Lys-709.

This sequence belongs to the complex I 75 kDa subunit family. Core subunit of respiratory chain NADH dehydrogenase (Complex I) which is composed of 45 different subunits. This is the largest subunit of complex I and it is a component of the iron-sulfur (IP) fragment of the enzyme. Complex I associates with ubiquinol-cytochrome reductase complex (Complex III) to form supercomplexes. Interacts with MDM2 and AKAP1. It depends on [2Fe-2S] cluster as a cofactor. The cofactor is [4Fe-4S] cluster.

Its subcellular location is the mitochondrion inner membrane. The catalysed reaction is a ubiquinone + NADH + 5 H(+)(in) = a ubiquinol + NAD(+) + 4 H(+)(out). Core subunit of the mitochondrial membrane respiratory chain NADH dehydrogenase (Complex I) which catalyzes electron transfer from NADH through the respiratory chain, using ubiquinone as an electron acceptor. Essential for catalysing the entry and efficient transfer of electrons within complex I. Plays a key role in the assembly and stability of complex I and participates in the association of complex I with ubiquinol-cytochrome reductase complex (Complex III) to form supercomplexes. The chain is NADH-ubiquinone oxidoreductase 75 kDa subunit, mitochondrial (NDUFS1) from Macaca fascicularis (Crab-eating macaque).